A 259-amino-acid polypeptide reads, in one-letter code: 5'-nucleotidase SurE (259 aa).

4 residues coordinate a divalent metal cation: aspartate 8, aspartate 9, serine 39, and asparagine 98.

Belongs to the SurE nucleotidase family. A divalent metal cation is required as a cofactor.

It localises to the cytoplasm. The enzyme catalyses a ribonucleoside 5'-phosphate + H2O = a ribonucleoside + phosphate. Functionally, nucleotidase that shows phosphatase activity on nucleoside 5'-monophosphates. The polypeptide is 5'-nucleotidase SurE (Fervidobacterium nodosum (strain ATCC 35602 / DSM 5306 / Rt17-B1)).